The sequence spans 287 residues: Large ribosomal subunit protein uL2 (287 aa).

A disordered region spans residues 221–287 (RGSVMNPCDH…SKRSRGGRDS (67 aa)). The span at 258 to 287 (KTRKRNKPSNRYVLRKRRKTSKRSRGGRDS) shows a compositional bias: basic residues.

This sequence belongs to the universal ribosomal protein uL2 family. Part of the 50S ribosomal subunit. Forms a bridge to the 30S subunit in the 70S ribosome.

In terms of biological role, one of the primary rRNA binding proteins. Required for association of the 30S and 50S subunits to form the 70S ribosome, for tRNA binding and peptide bond formation. It has been suggested to have peptidyltransferase activity; this is somewhat controversial. Makes several contacts with the 16S rRNA in the 70S ribosome. This Parasynechococcus marenigrum (strain WH8102) protein is Large ribosomal subunit protein uL2.